A 335-amino-acid chain; its full sequence is Cytoskeleton protein RodZ (335 aa).

Residues Met-1–Gly-111 lie on the Cytoplasmic side of the membrane. The HTH cro/C1-type domain occupies Leu-19 to Leu-71. The segment at residues Gln-30 to Glu-49 is a DNA-binding region (H-T-H motif). A helical; Signal-anchor for type II membrane protein membrane pass occupies residues Trp-112–Trp-132. The Periplasmic portion of the chain corresponds to Trp-133–Gln-335. Residues Asp-148–Leu-164 show a composition bias toward polar residues. A disordered region spans residues Asp-148 to Thr-244. 2 stretches are compositionally biased toward low complexity: residues Asp-165–Gln-205 and Asp-217–Asp-239.

It belongs to the RodZ family.

Its subcellular location is the cell inner membrane. Cytoskeletal protein that is involved in cell-shape control through regulation of the length of the long axis. This chain is Cytoskeleton protein RodZ, found in Escherichia coli O81 (strain ED1a).